The chain runs to 110 residues: UPF0145 protein LMOf2365_0219 (110 aa).

Belongs to the UPF0145 family.

The protein is UPF0145 protein LMOf2365_0219 of Listeria monocytogenes serotype 4b (strain F2365).